Reading from the N-terminus, the 259-residue chain is Eukaryotic translation initiation factor 4E1 (259 aa).

Positions 1–70 (MQSDFHRMKN…TATTTAPAGD (70 aa)) are disordered. Polar residues predominate over residues 18 to 27 (FKTSAPSTEQ). The span at 41 to 51 (EAKDVKPKEDP) shows a compositional bias: basic and acidic residues. Residues 54 to 70 (TGEPAGNTATTTAPAGD) are compositionally biased toward low complexity. MRNA is bound by residues 100–101 (WE), 146–147 (WE), and 199–204 (RGKSNK).

The protein belongs to the eukaryotic initiation factor 4E family. EIF4F is a multi-subunit complex, the composition of which varies with external and internal environmental conditions. It is composed of at least eIF4A, eIF4E1 and eIF4G1. Recruited by cup in oocytes and in early embryos, preventing the interaction with eIF4G. The interaction with cup therefore prevents the translation of key transcripts such as oskar (osk) and nanos (nos) in some regions in the early embryo. Interacts with mxt. Interacts with 4E-T and Thor. Forms a RNP containing at least me31B, eIF4E1, cup, tral and pAbp; this interaction is required for the translational silencing of maternal mRNAs during the maternal-to-zygotic transition. In terms of processing, phosphorylation increases the ability of the protein to bind to mRNA caps and to form the eIF4F complex. In terms of tissue distribution, expressed at the posterior end of developing oocytes (at protein level). Preferential expression in the pole cells, at different developmental stages.

The protein localises to the cytoplasm. The protein resides in the cytoplasmic ribonucleoprotein granule. It localises to the nucleus. It is found in the nuclear body. Its function is as follows. Recognizes and binds the 7-methylguanosine (m7G)-containing mRNA cap during an early step in the initiation of protein synthesis and facilitates ribosome binding by inducing the unwinding of the mRNAs secondary structures. In 0-1 hour embryos, forms a complex with me31B, cup, tral and pAbp which binds to various mRNAs including maternal mRNAs, and down-regulates their expression during the maternal-to-zygotic transition. This is Eukaryotic translation initiation factor 4E1 from Drosophila melanogaster (Fruit fly).